Here is a 436-residue protein sequence, read N- to C-terminus: Gamma-glutamyl phosphate reductase (436 aa).

The protein belongs to the gamma-glutamyl phosphate reductase family.

It localises to the cytoplasm. It carries out the reaction L-glutamate 5-semialdehyde + phosphate + NADP(+) = L-glutamyl 5-phosphate + NADPH + H(+). Its pathway is amino-acid biosynthesis; L-proline biosynthesis; L-glutamate 5-semialdehyde from L-glutamate: step 2/2. In terms of biological role, catalyzes the NADPH-dependent reduction of L-glutamate 5-phosphate into L-glutamate 5-semialdehyde and phosphate. The product spontaneously undergoes cyclization to form 1-pyrroline-5-carboxylate. This Prochlorococcus marinus (strain MIT 9515) protein is Gamma-glutamyl phosphate reductase.